The sequence spans 273 residues: Putative pyruvate, phosphate dikinase regulatory protein (273 aa).

149–156 lines the ADP pocket; that stretch reads GPSRTSKT.

It belongs to the pyruvate, phosphate/water dikinase regulatory protein family. PDRP subfamily.

The catalysed reaction is N(tele)-phospho-L-histidyl/L-threonyl-[pyruvate, phosphate dikinase] + ADP = N(tele)-phospho-L-histidyl/O-phospho-L-threonyl-[pyruvate, phosphate dikinase] + AMP + H(+). It catalyses the reaction N(tele)-phospho-L-histidyl/O-phospho-L-threonyl-[pyruvate, phosphate dikinase] + phosphate + H(+) = N(tele)-phospho-L-histidyl/L-threonyl-[pyruvate, phosphate dikinase] + diphosphate. Its function is as follows. Bifunctional serine/threonine kinase and phosphorylase involved in the regulation of the pyruvate, phosphate dikinase (PPDK) by catalyzing its phosphorylation/dephosphorylation. The sequence is that of Putative pyruvate, phosphate dikinase regulatory protein from Rickettsia prowazekii (strain Madrid E).